Consider the following 44-residue polypeptide: Photosystem I reaction center subunit IX (44 aa).

Residues 7–27 form a helical membrane-spanning segment; that stretch reads YLSVAPVVSTIWFGALAGLLI.

It belongs to the PsaJ family.

The protein localises to the plastid. It localises to the chloroplast thylakoid membrane. Its function is as follows. May help in the organization of the PsaE and PsaF subunits. The chain is Photosystem I reaction center subunit IX from Cucumis sativus (Cucumber).